A 942-amino-acid chain; its full sequence is Isoleucine--tRNA ligase (942 aa).

The 'HIGH' region signature appears at 58-68; that stretch reads PYVNGSIHLGH. An L-isoleucyl-5'-AMP-binding site is contributed by glutamate 564. Residues 605 to 609 carry the 'KMSKS' region motif; it reads KMSKS. Lysine 608 serves as a coordination point for ATP. Zn(2+)-binding residues include cysteine 905, cysteine 908, cysteine 925, and cysteine 928.

This sequence belongs to the class-I aminoacyl-tRNA synthetase family. IleS type 1 subfamily. Monomer. Zn(2+) is required as a cofactor.

It is found in the cytoplasm. It carries out the reaction tRNA(Ile) + L-isoleucine + ATP = L-isoleucyl-tRNA(Ile) + AMP + diphosphate. Functionally, catalyzes the attachment of isoleucine to tRNA(Ile). As IleRS can inadvertently accommodate and process structurally similar amino acids such as valine, to avoid such errors it has two additional distinct tRNA(Ile)-dependent editing activities. One activity is designated as 'pretransfer' editing and involves the hydrolysis of activated Val-AMP. The other activity is designated 'posttransfer' editing and involves deacylation of mischarged Val-tRNA(Ile). The polypeptide is Isoleucine--tRNA ligase (Blochmanniella pennsylvanica (strain BPEN)).